Reading from the N-terminus, the 1351-residue chain is D-lysergyl-peptide-synthetase subunit 2 (1351 aa).

The adenylation (A) domain stretch occupies residues 285–684; sequence RCLSQPTASA…GRKDTQVKLR (400 aa). A Carrier domain is found at 828–904; the sequence is APQTTTEKLL…ALACVVRSGK (77 aa). Position 865 is an O-(pantetheine 4'-phosphoryl)serine (S865). Residues 941–1340 are condensation (C) domain; sequence EDVYPCTPLQ…LIRDILAVPQ (400 aa).

Belongs to the NRP synthetase family.

Its pathway is alkaloid biosynthesis; ergot alkaloid biosynthesis. In terms of biological role, D-lysergyl-peptide-synthetase subunit 2; part of the gene cluster that mediates the biosynthesis of fungal ergot alkaloid ergovaline, the predominant ergopeptine product in E.festucae var. lolii. DmaW catalyzes the first step of ergot alkaloid biosynthesis by condensing dimethylallyl diphosphate (DMAP) and tryptophan to form 4-dimethylallyl-L-tryptophan. The second step is catalyzed by the methyltransferase easF that methylates 4-dimethylallyl-L-tryptophan in the presence of S-adenosyl-L-methionine, resulting in the formation of 4-dimethylallyl-L-abrine. The catalase easC and the FAD-dependent oxidoreductase easE then transform 4-dimethylallyl-L-abrine to chanoclavine-I which is further oxidized by easD in the presence of NAD(+), resulting in the formation of chanoclavine-I aldehyde. Agroclavine dehydrogenase easG then mediates the conversion of chanoclavine-I aldehyde to agroclavine via a non-enzymatic adduct reaction: the substrate is an iminium intermediate that is formed spontaneously from chanoclavine-I aldehyde in the presence of glutathione. The presence of easA is not required to complete this reaction. Further conversion of agroclavine to paspalic acid is a two-step process involving oxidation of agroclavine to elymoclavine and of elymoclavine to paspalic acid, the second step being performed by the elymoclavine oxidase cloA. Paspalic acid is then further converted to D-lysergic acid. Ergovaline is assembled from D-lysergic acid and three different amino acids by the D-lysergyl-peptide-synthetase composed of a monomudular (lpsB) and a trimodular (lpsA) nonribosomal peptide synthetase subunit. This Epichloe festucae var. lolii (Neotyphodium lolii) protein is D-lysergyl-peptide-synthetase subunit 2.